We begin with the raw amino-acid sequence, 196 residues long: Putative NADH dehydrogenase/NAD(P)H nitroreductase XOO4023 (196 aa).

The protein belongs to the nitroreductase family. HadB/RutE subfamily. FMN serves as cofactor.

This Xanthomonas oryzae pv. oryzae (strain MAFF 311018) protein is Putative NADH dehydrogenase/NAD(P)H nitroreductase XOO4023.